The chain runs to 273 residues: Pantothenate synthetase (273 aa).

27 to 34 (MGALHDGH) contributes to the ATP binding site. His-34 serves as the catalytic Proton donor. Gln-58 contacts (R)-pantoate. Gln-58 contributes to the beta-alanine binding site. 144–147 (GKKD) provides a ligand contact to ATP. (R)-pantoate is bound at residue Gln-150. ATP is bound by residues Val-173 and 181-184 (LSSR).

Belongs to the pantothenate synthetase family. In terms of assembly, homodimer.

The protein resides in the cytoplasm. The enzyme catalyses (R)-pantoate + beta-alanine + ATP = (R)-pantothenate + AMP + diphosphate + H(+). It functions in the pathway cofactor biosynthesis; (R)-pantothenate biosynthesis; (R)-pantothenate from (R)-pantoate and beta-alanine: step 1/1. Catalyzes the condensation of pantoate with beta-alanine in an ATP-dependent reaction via a pantoyl-adenylate intermediate. In Campylobacter concisus (strain 13826), this protein is Pantothenate synthetase.